The following is a 148-amino-acid chain: Large ribosomal subunit protein uL15 (148 aa).

Basic residues predominate over residues methionine 1 to glycine 30. Positions methionine 1–glycine 37 are disordered.

It belongs to the universal ribosomal protein uL15 family.

In Tenebrio molitor (Yellow mealworm beetle), this protein is Large ribosomal subunit protein uL15 (RpL27A).